The chain runs to 265 residues: Orotidine 5'-phosphate decarboxylase (265 aa).

Substrate is bound by residues aspartate 37, 59–61, 91–100, tyrosine 217, and arginine 235; these read KTH and DRKFADIGNT. The active-site Proton donor is lysine 93.

It belongs to the OMP decarboxylase family.

It carries out the reaction orotidine 5'-phosphate + H(+) = UMP + CO2. It participates in pyrimidine metabolism; UMP biosynthesis via de novo pathway; UMP from orotate: step 2/2. The polypeptide is Orotidine 5'-phosphate decarboxylase (URA3) (Diutina rugosa (Yeast)).